The primary structure comprises 337 residues: Tetraacyldisaccharide 4'-kinase (337 aa).

H51–T58 contacts ATP.

This sequence belongs to the LpxK family.

It catalyses the reaction a lipid A disaccharide + ATP = a lipid IVA + ADP + H(+). The protein operates within glycolipid biosynthesis; lipid IV(A) biosynthesis; lipid IV(A) from (3R)-3-hydroxytetradecanoyl-[acyl-carrier-protein] and UDP-N-acetyl-alpha-D-glucosamine: step 6/6. Its function is as follows. Transfers the gamma-phosphate of ATP to the 4'-position of a tetraacyldisaccharide 1-phosphate intermediate (termed DS-1-P) to form tetraacyldisaccharide 1,4'-bis-phosphate (lipid IVA). The chain is Tetraacyldisaccharide 4'-kinase from Nitrobacter winogradskyi (strain ATCC 25391 / DSM 10237 / CIP 104748 / NCIMB 11846 / Nb-255).